A 722-amino-acid polypeptide reads, in one-letter code: 1,4-alpha-glucan branching enzyme GlgB (722 aa).

Catalysis depends on Asp-401, which acts as the Nucleophile. Residue Glu-454 is the Proton donor of the active site.

Belongs to the glycosyl hydrolase 13 family. GlgB subfamily. As to quaternary structure, monomer.

The catalysed reaction is Transfers a segment of a (1-&gt;4)-alpha-D-glucan chain to a primary hydroxy group in a similar glucan chain.. Its pathway is glycan biosynthesis; glycogen biosynthesis. Its function is as follows. Catalyzes the formation of the alpha-1,6-glucosidic linkages in glycogen by scission of a 1,4-alpha-linked oligosaccharide from growing alpha-1,4-glucan chains and the subsequent attachment of the oligosaccharide to the alpha-1,6 position. The sequence is that of 1,4-alpha-glucan branching enzyme GlgB from Rubrobacter xylanophilus (strain DSM 9941 / JCM 11954 / NBRC 16129 / PRD-1).